A 426-amino-acid polypeptide reads, in one-letter code: Monocarboxylate transporter 13 (426 aa).

Over 1-10 (MAYRAEPPDG) the chain is Cytoplasmic. 12 consecutive transmembrane segments (helical) span residues 11-31 (GWGWMVVLSAFFQSALVFGVL), 52-72 (VSWIASIGIAVQQFGSPVGSA), 83-103 (VMTGGILTALGMLLASFATSL), 106-126 (LYLSIGLLSGSGWALTFTPTL), 139-159 (LAMGLALTGVGLSSFAFAPLF), 172-192 (LLLVSALSLHLVACGALLRPL), 221-241 (VALTLINTGYFIPYVHLVAHL), 244-264 (LGWDPLPAAFLLSVAAISDLV), 283-303 (LLMLWTTLTGVILALYPVAEA), 306-326 (GLVALTMAYGFTSGALTPVAF), 338-358 (IYCGLGLVQMVESIGGLLGAP), and 374-394 (FVVAGAFLLAGSGVLITLPHF). Topologically, residues 395–426 (FCFSAPTSKPQDLVTEALDTKVPLPEEGLGED) are cytoplasmic.

The protein belongs to the major facilitator superfamily. Monocarboxylate porter (TC 2.A.1.13) family.

Its subcellular location is the golgi apparatus membrane. It is found in the cell membrane. In terms of biological role, proton-linked monocarboxylate transporter. May catalyze the transport of monocarboxylates across the plasma membrane. This chain is Monocarboxylate transporter 13 (SLC16A13), found in Bos taurus (Bovine).